The primary structure comprises 101 residues: Small ribosomal subunit protein eS24 (101 aa).

This sequence belongs to the eukaryotic ribosomal protein eS24 family.

The protein is Small ribosomal subunit protein eS24 of Methanosarcina acetivorans (strain ATCC 35395 / DSM 2834 / JCM 12185 / C2A).